A 209-amino-acid chain; its full sequence is Mitochondrial import inner membrane translocase subunit Tim23 (209 aa).

A run of 3 helical transmembrane segments spans residues 73–93 (FELAFFTIGGCCMTGAAFGAM), 125–145 (ALWANTLGSLALLYSAFGVII), and 181–197 (GLTGLTLTSLYALYNNW).

Belongs to the Tim17/Tim22/Tim23 family. In terms of assembly, component of the TIM23 complex at least composed of TIMM23, TIMM17 (TIMM17A or TIMM17B) and TIMM50; within this complex, directly interacts with TIMM50. The complex interacts with the TIMM44 component of the PAM complex and with DNAJC15. Upon mitochondrial depolarization, interacts with PINK1; the interaction is required for PINK1 accumulation at the outer mitochondrial membrane, kinase activation by autophosphorylation and PRKN recruitement to mitochondria.

The protein localises to the mitochondrion inner membrane. In terms of biological role, essential component of the TIM23 complex, a complex that mediates the translocation of transit peptide-containing proteins across the mitochondrial inner membrane. Has a role in the activation of stress-induced mitophagy by protecting PINK1 from OMA1-mediated degradation and facilitating its accumulation at the outer mitochondrial membrane in response to depolarization. The sequence is that of Mitochondrial import inner membrane translocase subunit Tim23 (TIMM23) from Homo sapiens (Human).